Reading from the N-terminus, the 356-residue chain is Fructose-1,6-bisphosphatase class 1 1 (356 aa).

Mg(2+) is bound by residues glutamate 106, aspartate 129, leucine 131, and aspartate 132. Substrate contacts are provided by residues 132–135, asparagine 225, tyrosine 258, and lysine 288; that span reads DGSS. A Mg(2+)-binding site is contributed by glutamate 294.

Belongs to the FBPase class 1 family. Homotetramer. Requires Mg(2+) as cofactor.

The protein resides in the cytoplasm. It catalyses the reaction beta-D-fructose 1,6-bisphosphate + H2O = beta-D-fructose 6-phosphate + phosphate. It participates in carbohydrate biosynthesis; gluconeogenesis. This Salinibacter ruber (strain DSM 13855 / M31) protein is Fructose-1,6-bisphosphatase class 1 1.